Reading from the N-terminus, the 294-residue chain is Flavin-dependent thymidylate synthase (294 aa).

One can recognise a ThyX domain in the interval 27–250 (GFIRVIDYMG…PFTYEAFEEY (224 aa)). FAD-binding positions include Thr73, 96 to 98 (RHR), and Glu104. Residues 93–96 (QWIR), 104–108 (EYSAR), and Arg189 contribute to the dUMP site. A ThyX motif motif is present at residues 96-106 (RHRTASVNEYS). FAD contacts are provided by residues 205-207 (NLH) and His211. Arg216 contributes to the dUMP binding site. The Involved in ionization of N3 of dUMP, leading to its activation role is filled by Arg216.

It belongs to the thymidylate synthase ThyX family. Homotetramer. FAD serves as cofactor.

The enzyme catalyses dUMP + (6R)-5,10-methylene-5,6,7,8-tetrahydrofolate + NADPH + H(+) = dTMP + (6S)-5,6,7,8-tetrahydrofolate + NADP(+). The protein operates within pyrimidine metabolism; dTTP biosynthesis. In terms of biological role, catalyzes the reductive methylation of 2'-deoxyuridine-5'-monophosphate (dUMP) to 2'-deoxythymidine-5'-monophosphate (dTMP) while utilizing 5,10-methylenetetrahydrofolate (mTHF) as the methyl donor, and NADPH and FADH(2) as the reductant. The sequence is that of Flavin-dependent thymidylate synthase from Rickettsia bellii (strain RML369-C).